The following is an 83-amino-acid chain: Erabutoxin b (83 aa).

The first 21 residues, 1 to 21 (MKTLLLTLVVVTIVCLDLGYT), serve as a signal peptide directing secretion. The segment at 24–38 (CFNHQSSQPQTTKTC) is loop I. 4 cysteine pairs are disulfide-bonded: Cys-24–Cys-45, Cys-38–Cys-62, Cys-64–Cys-75, and Cys-76–Cys-81. Positions 39 to 44 (SPGESS) are stretch between loop I and loop II. Positions 45–62 (CYHKQWSDFRGTIIERGC) are loop II. Residues 64–75 (CPTVKPGIKLSC) are loop III.

It belongs to the three-finger toxin family. Short-chain subfamily. Type I alpha-neurotoxin sub-subfamily. As to expression, expressed by the venom gland.

It is found in the secreted. Binds with high affinity to muscular nicotinic acetylcholine receptors (nAChRs) (tested on Torpedo marmorata, Kd=0.07 nM), and with low affinity to neuronal alpha-7/CHRNA7 nAChRs (tested on chimeric alpha-7/CHRNA7, Kd=22 uM) and inhibit acetylcholine from binding to the receptor, thereby impairing neuromuscular transmission. Produces peripheral paralysis by blocking neuromuscular transmission at the postsynaptic site. The chain is Erabutoxin b from Laticauda semifasciata (Black-banded sea krait).